The primary structure comprises 360 residues: Mannose-1-phosphate guanyltransferase beta-B (360 aa).

It belongs to the transferase hexapeptide repeat family.

It catalyses the reaction alpha-D-mannose 1-phosphate + GTP + H(+) = GDP-alpha-D-mannose + diphosphate. It participates in nucleotide-sugar biosynthesis; GDP-alpha-D-mannose biosynthesis; GDP-alpha-D-mannose from alpha-D-mannose 1-phosphate (GTP route): step 1/1. In terms of biological role, catalyzes the formation of GDP-mannose, an essential precursor of glycan moieties of glycoproteins and glycolipids. The protein is Mannose-1-phosphate guanyltransferase beta-B (gmppb-b) of Xenopus laevis (African clawed frog).